The following is a 301-amino-acid chain: Protein ARMCX6 (301 aa).

The interval 1–6 (MGRARE) is mitochondrion outer membrane (MOM)-targeting sequence. Over 1-7 (MGRAREM) the chain is Mitochondrial intermembrane. The chain crosses the membrane as a helical; Signal-anchor span at residues 8–25 (GWMAAGLMIGAGACYCMY). Positions 26 to 36 (KLTMGRSEGNE) are mitochondrion outer membrane (MOM)-targeting sequence. Residues 26-301 (KLTMGRSEGN…REMLVEAISP (276 aa)) are Cytoplasmic-facing. The disordered stretch occupies residues 69 to 101 (WSEDGDWDEPGAPGGTEDRRSGGGKANRAHPIK).

The protein belongs to the eutherian X-chromosome-specific Armcx family. In terms of tissue distribution, highly expressed in the developing neural tissues, neural crest derivatives and hind limbs. Also widely expressed in the adult nervous tissue, especially in the forebrain, including the cerebral cortex, hippocampus and thalamus.

The protein resides in the mitochondrion. It localises to the mitochondrion outer membrane. Functionally, may regulate the dynamics and distribution of mitochondria in neural cells. This chain is Protein ARMCX6 (Armcx6), found in Mus musculus (Mouse).